Reading from the N-terminus, the 550-residue chain is Probable asparagine synthetase [glutamine-hydrolyzing] (550 aa).

Residue C2 is the For GATase activity of the active site. One can recognise a Glutamine amidotransferase type-2 domain in the interval 2–189 (CGIICFIQYG…PNQYVTIDLS (188 aa)). L-glutamine contacts are provided by residues 53–57 (RLAIM), 78–80 (NGE), and D100. The Asparagine synthetase domain occupies 213 to 530 (YYQSHKSLID…GGRDHIIPHY (318 aa)). ATP is bound by residues L256, V284, and 360-361 (SG).

The enzyme catalyses L-aspartate + L-glutamine + ATP + H2O = L-asparagine + L-glutamate + AMP + diphosphate + H(+). The protein operates within amino-acid biosynthesis; L-asparagine biosynthesis; L-asparagine from L-aspartate (L-Gln route): step 1/1. The sequence is that of Probable asparagine synthetase [glutamine-hydrolyzing] from Acanthamoeba polyphaga mimivirus (APMV).